Here is a 326-residue protein sequence, read N- to C-terminus: Serpentine receptor class alpha-12 (326 aa).

Residues 1 to 17 (MSCASEVQAQLFTHPVQ) are Extracellular-facing. The chain crosses the membrane as a helical span at residues 18-38 (IIYACVQTVLFLATIIGSLLA). Residues 39-54 (IVQLCKKTTIPDSTKV) are Cytoplasmic-facing. The chain crosses the membrane as a helical span at residues 55–75 (LLIGALFFANAHELAYFSSPF). Residues 76–101 (KVFKMNLFHTNTSCYPLASTLECIPT) lie on the Extracellular side of the membrane. Residues 102-122 (TTVLAMGISGNMLIQSALSIF) form a helical membrane-spanning segment. The Cytoplasmic segment spans residues 123–138 (RLLATIFPVCYSRMRA). Residues 139–159 (LPGVVLLFMVLIPSFLSYSWI) form a helical membrane-spanning segment. Residues 160 to 185 (RSDIVLDDYQMFCSQWSANISSRANT) lie on the Extracellular side of the membrane. Residues 186–206 (YLEYCSYLTVAHIIINALIIL) form a helical membrane-spanning segment. Residues 207–234 (RNRSVESKCRFDVQQRYLNSETLKTTQT) are Cytoplasmic-facing. Residues 235-255 (ICYLSIAQFLAMFLYSGGVLF) form a helical membrane-spanning segment. The Extracellular portion of the chain corresponds to 256 to 270 (MRKNQKNIPTLIYIN). A helical transmembrane segment spans residues 271 to 291 (VIVWVYAPPYACVSLAPLILF). Residues 292-326 (SLWNLKKQRQIRIQSITVQKETQEDHIRKLQLSWG) are Cytoplasmic-facing.

This sequence belongs to the nematode receptor-like protein sra family.

The protein localises to the membrane. This is Serpentine receptor class alpha-12 from Caenorhabditis briggsae.